The chain runs to 88 residues: Small ribosomal subunit protein bS20 (88 aa).

A disordered region spans residues 1-21 (MANTTSAKKATRKIARRTAVN).

It belongs to the bacterial ribosomal protein bS20 family.

In terms of biological role, binds directly to 16S ribosomal RNA. The chain is Small ribosomal subunit protein bS20 from Sinorhizobium fredii (strain NBRC 101917 / NGR234).